We begin with the raw amino-acid sequence, 211 residues long: tRNA (pseudouridine(54)-N(1))-methyltransferase (211 aa).

Leucine 128, glycine 150, and cysteine 183 together coordinate S-adenosyl-L-methionine.

This sequence belongs to the methyltransferase superfamily. TrmY family. In terms of assembly, homodimer.

Its subcellular location is the cytoplasm. The enzyme catalyses pseudouridine(54) in tRNA + S-adenosyl-L-methionine = N(1)-methylpseudouridine(54) in tRNA + S-adenosyl-L-homocysteine + H(+). In terms of biological role, specifically catalyzes the N1-methylation of pseudouridine at position 54 (Psi54) in tRNAs. In Methanosarcina mazei (strain ATCC BAA-159 / DSM 3647 / Goe1 / Go1 / JCM 11833 / OCM 88) (Methanosarcina frisia), this protein is tRNA (pseudouridine(54)-N(1))-methyltransferase.